A 162-amino-acid chain; its full sequence is CD-NTase-associated protein 7 (162 aa).

Residues 138 to 162 (HSGLTQSGGREYSSNGYGMQRKDYN) are disordered. The segment covering 139–154 (SGLTQSGGREYSSNGY) has biased composition (polar residues).

It belongs to the HORMA family. HORMA1 subfamily. In terms of assembly, forms complexes with CdnC with 1:1 and 2:2 stoichimetry, and a 1:1:6 CdnC:Cap7:Cap6 complex.

Its function is as follows. Sensor protein of a CBASS antivirus system. CBASS (cyclic oligonucleotide-based antiphage signaling system) provides immunity against bacteriophage. The CD-NTase protein synthesizes cyclic nucleotides in response to infection; these serve as specific second messenger signals. The signals activate a diverse range of effectors, leading to bacterial cell death and thus abortive phage infection. A type III CBASS system. Expression of this CBASS system (Cap18-Cap6-Cap7-CdnC-CapW-Cap17) in a susceptible E.coli (strain MG1655) confers resistance to bacteriophage P1. The sensor protein for this CBASS system. Binds to a closure peptide, which allows it to activate CdnC for second messenger synthesis. In Escherichia coli (strain KTE188), this protein is CD-NTase-associated protein 7.